Reading from the N-terminus, the 244-residue chain is Putative outer membrane protein RC0105 (244 aa).

The signal sequence occupies residues 1-23 (MLRIVKKLGIILFVSTISINSFA).

The protein belongs to the OmpW/AlkL family.

Its subcellular location is the cell outer membrane. This Rickettsia conorii (strain ATCC VR-613 / Malish 7) protein is Putative outer membrane protein RC0105.